Here is a 421-residue protein sequence, read N- to C-terminus: Functional amyloid transporter FapF (421 aa).

Residues 1–24 (MTQTLSLRAVLCATTLVSPFLAQA) form the signal peptide. Residues 23-64 (QAATESEVEALKKELLELRQRYEAQQNALMVLEQRVRQVEAQ) are a coiled coil.

This sequence belongs to the amyloid transporter (TC 9.B.153) family.

It is found in the secreted. Its subcellular location is the cell surface. It localises to the cell outer membrane. In terms of biological role, transports fibril components across the outer membrane. Upon overexpression of the endogenous six-gene locus (fapA-fapF), cells form large clumps during liquid growth, make large amounts of biofilm and produce amyloid fibrils. The sequence is that of Functional amyloid transporter FapF from Pseudomonas aeruginosa (strain ATCC 15692 / DSM 22644 / CIP 104116 / JCM 14847 / LMG 12228 / 1C / PRS 101 / PAO1).